Consider the following 514-residue polypeptide: Probable endopolygalacturonase D (514 aa).

A signal peptide spans 1-16; sequence MKRCALLTPLLPLALA. A disordered region spans residues 134 to 166; it reads IKSSSPGPSSSFAAAATTEAPTSTRASPYTPYT. Positions 136–166 are enriched in low complexity; it reads SSSPGPSSSFAAAATTEAPTSTRASPYTPYT. Cysteine 173 and cysteine 188 are disulfide-bonded. The N-linked (GlcNAc...) asparagine glycan is linked to asparagine 240. 7 PbH1 repeats span residues 280–302, 303–341, 342–363, 364–384, 393–414, 422–444, and 456–500; these read VYNS…DIEN, TESL…DIKS, STDL…AITS, GTNI…SIGS, VDGV…RIKT, VSNI…VVQQ, and SNGV…SITG. The segment at 312 to 335 is disordered; sequence TLDNSAGDEPNDSSDGDPAAHNSD. Asparagine 322 carries an N-linked (GlcNAc...) asparagine glycan. Aspartate 356 serves as the catalytic Proton donor. An intrachain disulfide couples cysteine 358 to cysteine 374. N-linked (GlcNAc...) asparagine glycosylation occurs at asparagine 366. The active site involves histidine 378. Asparagine 429 carries an N-linked (GlcNAc...) asparagine glycan. Cysteines 483 and 488 form a disulfide. The N-linked (GlcNAc...) asparagine glycan is linked to asparagine 490. A disulfide bond links cysteine 506 and cysteine 513.

It belongs to the glycosyl hydrolase 28 family.

It localises to the secreted. It carries out the reaction (1,4-alpha-D-galacturonosyl)n+m + H2O = (1,4-alpha-D-galacturonosyl)n + (1,4-alpha-D-galacturonosyl)m.. Its function is as follows. Involved in maceration and soft-rotting of plant tissue. Hydrolyzes the 1,4-alpha glycosidic bonds of de-esterified pectate in the smooth region of the plant cell wall. This Emericella nidulans (strain FGSC A4 / ATCC 38163 / CBS 112.46 / NRRL 194 / M139) (Aspergillus nidulans) protein is Probable endopolygalacturonase D (pgaD).